We begin with the raw amino-acid sequence, 156 residues long: Small ribosomal subunit protein uS7 (156 aa).

The protein belongs to the universal ribosomal protein uS7 family. Part of the 30S ribosomal subunit. Contacts proteins S9 and S11.

Functionally, one of the primary rRNA binding proteins, it binds directly to 16S rRNA where it nucleates assembly of the head domain of the 30S subunit. Is located at the subunit interface close to the decoding center, probably blocks exit of the E-site tRNA. The chain is Small ribosomal subunit protein uS7 from Streptococcus pyogenes serotype M1.